Reading from the N-terminus, the 534-residue chain is Importin subunit alpha-1b (534 aa).

The IBB domain occupies 1-58 (MSLRPSERAEVRRSRYKVAVDADEGRRRREDNMVEIRKSRREESLLKKRRDGLPAAAA). ARM repeat units lie at residues 111–151 (SPPI…NIAS), 154–193 (SDNTKVVVESGAVPIFVKLLSSPSEDVREQAVWALGNVAG), 196–236 (PKCR…NFCR), 238–277 (KPQPNFEQVKPALSALQRLIHSQDEEVLTDACWALSYLSD), 280–319 (NDKIQAVIESGVFPRLVELLMHPSASVLIPALRTVGNIVT), 322–362 (DMQT…NITA), 365–404 (REQIQAVINANIIAPLVHLLQTAEFDIKKEAAWAISNATS), and 408–447 (HDQIKYLVAQGCIKPLCDLLVCPDPRIVTVCLEGLENILK). Positions 505–534 (DAMPSGDNAQNGFNFGNQQPNVPSGGFNFG) are disordered. Low complexity predominate over residues 514–523 (QNGFNFGNQQ).

This sequence belongs to the importin alpha family. Forms a complex with importin subunit beta-1. The whole complex, most stable and composed of importin alpha and importin beta, is referred to as PTAC or pore targeting complex. In terms of tissue distribution, highly expressed in root and weakly in callus, etiolated leaf and green leaf.

The protein localises to the cytoplasm. It localises to the perinuclear region. Its function is as follows. Functions in nuclear protein import. Binds specifically and directly to substrates containing either a simple or bipartite NLS motif. Promotes docking of import substrates to the nuclear envelope. In conjunction with importin beta-1, mediates the nuclear envelope docking, and the subsequent translocation into the nucleus of the constitutive morphogenetic 1 (COP1) protein containing bipartite NLS motif. In Oryza sativa subsp. japonica (Rice), this protein is Importin subunit alpha-1b.